Consider the following 264-residue polypeptide: Small ribosomal subunit protein uS2 (264 aa).

Belongs to the universal ribosomal protein uS2 family.

The chain is Small ribosomal subunit protein uS2 from Helicobacter pylori (strain P12).